A 342-amino-acid chain; its full sequence is Biotin synthase (342 aa).

The region spanning 38-262 (GQVQISTLLS…MMPTSYVRLS (225 aa)) is the Radical SAM core domain. [4Fe-4S] cluster is bound by residues cysteine 53, cysteine 57, and cysteine 60. Cysteine 97, cysteine 128, cysteine 188, and arginine 260 together coordinate [2Fe-2S] cluster.

It belongs to the radical SAM superfamily. Biotin synthase family. Homodimer. The cofactor is [4Fe-4S] cluster. Requires [2Fe-2S] cluster as cofactor.

It catalyses the reaction (4R,5S)-dethiobiotin + (sulfur carrier)-SH + 2 reduced [2Fe-2S]-[ferredoxin] + 2 S-adenosyl-L-methionine = (sulfur carrier)-H + biotin + 2 5'-deoxyadenosine + 2 L-methionine + 2 oxidized [2Fe-2S]-[ferredoxin]. It functions in the pathway cofactor biosynthesis; biotin biosynthesis; biotin from 7,8-diaminononanoate: step 2/2. Catalyzes the conversion of dethiobiotin (DTB) to biotin by the insertion of a sulfur atom into dethiobiotin via a radical-based mechanism. This is Biotin synthase from Baumannia cicadellinicola subsp. Homalodisca coagulata.